The chain runs to 397 residues: Major outer membrane porin, serovar C (397 aa).

The signal sequence occupies residues 1 to 22 (MKKLLKSVLVFAALSSASSLQA).

The protein belongs to the chlamydial porin (CP) (TC 1.B.2) family. Part of a disulfide cross-linked outer membrane complex (COMC) composed of the major outer membrane porin (MOMP), the small cysteine-rich protein (OmcA) and the large cysteine-rich periplasmic protein (OmcB).

Its subcellular location is the cell outer membrane. Functionally, in elementary bodies (EBs, the infectious stage, which is able to survive outside the host cell) provides the structural integrity of the outer envelope through disulfide cross-links with the small cysteine-rich protein and the large cysteine-rich periplasmic protein. It has been described in publications as the Sarkosyl-insoluble COMC (Chlamydia outer membrane complex), and serves as the functional equivalent of peptidoglycan. In terms of biological role, permits diffusion of specific solutes through the outer membrane. The chain is Major outer membrane porin, serovar C (ompA) from Chlamydia trachomatis.